The chain runs to 547 residues: 2-succinyl-5-enolpyruvyl-6-hydroxy-3-cyclohexene-1-carboxylate synthase (547 aa).

Belongs to the TPP enzyme family. MenD subfamily. In terms of assembly, homodimer. Mg(2+) serves as cofactor. Mn(2+) is required as a cofactor. It depends on thiamine diphosphate as a cofactor.

The catalysed reaction is isochorismate + 2-oxoglutarate + H(+) = 5-enolpyruvoyl-6-hydroxy-2-succinyl-cyclohex-3-ene-1-carboxylate + CO2. The protein operates within quinol/quinone metabolism; 1,4-dihydroxy-2-naphthoate biosynthesis; 1,4-dihydroxy-2-naphthoate from chorismate: step 2/7. It functions in the pathway quinol/quinone metabolism; menaquinone biosynthesis. Functionally, catalyzes the thiamine diphosphate-dependent decarboxylation of 2-oxoglutarate and the subsequent addition of the resulting succinic semialdehyde-thiamine pyrophosphate anion to isochorismate to yield 2-succinyl-5-enolpyruvyl-6-hydroxy-3-cyclohexene-1-carboxylate (SEPHCHC). The protein is 2-succinyl-5-enolpyruvyl-6-hydroxy-3-cyclohexene-1-carboxylate synthase of Mycobacterium sp. (strain KMS).